A 260-amino-acid polypeptide reads, in one-letter code: Cytochrome c oxidase subunit 2 (260 aa).

Over 1-39 (MKFEWLFLTIAPCDAAEPWQLGFQDAATPMMQGIIDLHH) the chain is Mitochondrial intermembrane. The helical transmembrane segment at 40–61 (DIFFFLILILVFVSRILVRALW) threads the bilayer. The Mitochondrial matrix segment spans residues 62–76 (HFHYKKNPIPQRIVH). Residues 77-104 (GTTIEILRTIFPSIIPMFIAIPSFALLY) form a helical membrane-spanning segment. At 105-260 (SMDEVVVDPA…QLIPQTTGEA (156 aa)) the chain is on the mitochondrial intermembrane side. Residues His186, Cys221, Glu223, Cys225, and His229 each contribute to the Cu cation site. Glu223 lines the Mg(2+) pocket.

This sequence belongs to the cytochrome c oxidase subunit 2 family. In terms of assembly, component of the cytochrome c oxidase (complex IV, CIV), a multisubunit enzyme composed of a catalytic core of 3 subunits and several supernumerary subunits. The complex exists as a monomer or a dimer and forms supercomplexes (SCs) in the inner mitochondrial membrane with ubiquinol-cytochrome c oxidoreductase (cytochrome b-c1 complex, complex III, CIII). Cu cation serves as cofactor.

It is found in the mitochondrion inner membrane. It carries out the reaction 4 Fe(II)-[cytochrome c] + O2 + 8 H(+)(in) = 4 Fe(III)-[cytochrome c] + 2 H2O + 4 H(+)(out). Component of the cytochrome c oxidase, the last enzyme in the mitochondrial electron transport chain which drives oxidative phosphorylation. The respiratory chain contains 3 multisubunit complexes succinate dehydrogenase (complex II, CII), ubiquinol-cytochrome c oxidoreductase (cytochrome b-c1 complex, complex III, CIII) and cytochrome c oxidase (complex IV, CIV), that cooperate to transfer electrons derived from NADH and succinate to molecular oxygen, creating an electrochemical gradient over the inner membrane that drives transmembrane transport and the ATP synthase. Cytochrome c oxidase is the component of the respiratory chain that catalyzes the reduction of oxygen to water. Electrons originating from reduced cytochrome c in the intermembrane space (IMS) are transferred via the dinuclear copper A center (CU(A)) of subunit 2 and heme A of subunit 1 to the active site in subunit 1, a binuclear center (BNC) formed by heme A3 and copper B (CU(B)). The BNC reduces molecular oxygen to 2 water molecules using 4 electrons from cytochrome c in the IMS and 4 protons from the mitochondrial matrix. This is Cytochrome c oxidase subunit 2 (COX2) from Glycine max (Soybean).